A 320-amino-acid polypeptide reads, in one-letter code: Acetyl-coenzyme A carboxylase carboxyl transferase subunit alpha (320 aa).

In terms of domain architecture, CoA carboxyltransferase C-terminal spans 41–295 (RIEEKAGQAL…GDAIAQAFDE (255 aa)).

The protein belongs to the AccA family. Acetyl-CoA carboxylase is a heterohexamer composed of biotin carboxyl carrier protein (AccB), biotin carboxylase (AccC) and two subunits each of ACCase subunit alpha (AccA) and ACCase subunit beta (AccD).

Its subcellular location is the cytoplasm. The enzyme catalyses N(6)-carboxybiotinyl-L-lysyl-[protein] + acetyl-CoA = N(6)-biotinyl-L-lysyl-[protein] + malonyl-CoA. It functions in the pathway lipid metabolism; malonyl-CoA biosynthesis; malonyl-CoA from acetyl-CoA: step 1/1. Its function is as follows. Component of the acetyl coenzyme A carboxylase (ACC) complex. First, biotin carboxylase catalyzes the carboxylation of biotin on its carrier protein (BCCP) and then the CO(2) group is transferred by the carboxyltransferase to acetyl-CoA to form malonyl-CoA. This is Acetyl-coenzyme A carboxylase carboxyl transferase subunit alpha from Bradyrhizobium sp. (strain ORS 278).